The primary structure comprises 296 residues: Bifunctional protein FolD (296 aa).

Residues 166 to 168 (GRS), serine 195, and threonine 236 contribute to the NADP(+) site.

This sequence belongs to the tetrahydrofolate dehydrogenase/cyclohydrolase family. Homodimer.

It catalyses the reaction (6R)-5,10-methylene-5,6,7,8-tetrahydrofolate + NADP(+) = (6R)-5,10-methenyltetrahydrofolate + NADPH. The enzyme catalyses (6R)-5,10-methenyltetrahydrofolate + H2O = (6R)-10-formyltetrahydrofolate + H(+). The protein operates within one-carbon metabolism; tetrahydrofolate interconversion. Catalyzes the oxidation of 5,10-methylenetetrahydrofolate to 5,10-methenyltetrahydrofolate and then the hydrolysis of 5,10-methenyltetrahydrofolate to 10-formyltetrahydrofolate. This Dehalococcoides mccartyi (strain ATCC BAA-2266 / KCTC 15142 / 195) (Dehalococcoides ethenogenes (strain 195)) protein is Bifunctional protein FolD.